Here is a 259-residue protein sequence, read N- to C-terminus: Protein odd-skipped-related 1 (259 aa).

3 consecutive C2H2-type zinc fingers follow at residues 168–190 (FVCKFCGRHFTKSYNLLIHERTH), 196–218 (YTCDICHKAFRRQDHLRDHRYIH), and 224–246 (FKCQECGKGFCQSRTLAVHKTLH).

The protein belongs to the Odd C2H2-type zinc-finger protein family. In terms of tissue distribution, at early gastrula stage, expressed in the involuting mesoderm and endoderm. During neurulation, expressed in the pronephric primordium, following expression of osr2. During tailbud (stage 35), expressed in the rectal diverticulum and in the kidney ducts.

The protein resides in the nucleus. Its function is as follows. Transcriptional repressor. Required for pronephric kidney development. This chain is Protein odd-skipped-related 1, found in Xenopus laevis (African clawed frog).